We begin with the raw amino-acid sequence, 356 residues long: Molybdenum import ATP-binding protein ModC (356 aa).

One can recognise an ABC transporter domain in the interval 1-232 (MEDIHARFHI…LDLPIRLGED (232 aa)). 33–40 (GHSGSGKT) is a binding site for ATP. The 66-residue stretch at 291–356 (ETSVLNLLRG…VQVKSVALME (66 aa)) folds into the Mop domain.

Belongs to the ABC transporter superfamily. Molybdate importer (TC 3.A.1.8) family. The complex is composed of two ATP-binding proteins (ModC), two transmembrane proteins (ModB) and a solute-binding protein (ModA).

It is found in the cell inner membrane. The enzyme catalyses molybdate(out) + ATP + H2O = molybdate(in) + ADP + phosphate + H(+). In terms of biological role, part of the ABC transporter complex ModABC involved in molybdenum import. Responsible for energy coupling to the transport system. The chain is Molybdenum import ATP-binding protein ModC from Methylococcus capsulatus (strain ATCC 33009 / NCIMB 11132 / Bath).